Here is a 402-residue protein sequence, read N- to C-terminus: Multidrug resistance protein MdtH (402 aa).

The Cytoplasmic segment spans residues 1-12 (MSRVSQARNLGK). A helical membrane pass occupies residues 13-33 (YFLLIDNMLVVLGFFVVFPLI). Topologically, residues 34–98 (SIRFVDQMGW…GFATMGIAHE (65 aa)) are periplasmic. A helical transmembrane segment spans residues 99-116 (PWLLWFSCLLSGLGGTLF). Topologically, residues 117–138 (DPPRSALVVKLIRPQQRGRFFS) are cytoplasmic. A helical transmembrane segment spans residues 139–159 (LLMMQDSAGAVIGALLGSWLL). The Periplasmic segment spans residues 160-164 (QYDFR). The helical transmembrane segment at 165 to 185 (LVCATGAVLFVLCAAFNAWLL) threads the bilayer. At 186–213 (PAWKLSTVRTPVREGMTRVMRDKRFVTY) the chain is on the cytoplasmic side. A helical transmembrane segment spans residues 214 to 234 (VLTLAGYYMLAVQVMLMLPIM). The Periplasmic segment spans residues 235-243 (VNDVAGAPS). A helical membrane pass occupies residues 244–264 (AVKWMYAIEACLSLTLLYPIA). Over 265–276 (RWSEKHFRLEHR) the chain is Cytoplasmic. A helical membrane pass occupies residues 277–297 (LMAGLLIMSLSMMPVGMVSGL). Topologically, residues 298-299 (QQ) are periplasmic. The chain crosses the membrane as a helical span at residues 300–320 (LFTLICLFYIGSIIAEPARET). Topologically, residues 321 to 339 (LSASLADARARGSYMGCSR) are cytoplasmic. A helical membrane pass occupies residues 340-360 (LGLAIGGAIGYIGGGWLFDLG). The Periplasmic segment spans residues 361–367 (KSAHQPE). A helical transmembrane segment spans residues 368–388 (LPWMMLGIIGIFTFLALGWQF). The Cytoplasmic portion of the chain corresponds to 389 to 402 (SQKRAARRLLERDA).

It belongs to the major facilitator superfamily. DHA1 family. MdtH (TC 2.A.1.2.21) subfamily.

The protein localises to the cell inner membrane. Functionally, confers resistance to norfloxacin and enoxacin. In Escherichia coli (strain SE11), this protein is Multidrug resistance protein MdtH.